The sequence spans 296 residues: MAATPAFRGSFTALVTPFKNGSLDEEAFRKLVNWQIAEGTTGLVPVGTTGESPTLSHDEHHKVVEWCVEEAKGRVPVIAGAGSNSTTEAVELAKHAEKAGADAVLVVTPYYNKPTQEGMYLHFKAINDAIGIPIIIYNIPPRSVVDMSVDTMSRLYELQNIVGVKDATANLGRVSQQRHAMGPDFIQLSGEDMTALAYMAAGGHGCISVVSNVAPKACSDLMAAVFKGDYAGALKIQDRLVPLHDAVFKEPGVSGAKHGLTLLGRIQEEVRLPLIPVSAPTGQAIRSAMIHAGLLN.

Thr49 is a pyruvate binding site. The Proton donor/acceptor role is filled by Tyr137. The active-site Schiff-base intermediate with substrate is Lys165. Position 207 (Ile207) interacts with pyruvate.

This sequence belongs to the DapA family. As to quaternary structure, homotetramer; dimer of dimers.

The protein resides in the cytoplasm. It catalyses the reaction L-aspartate 4-semialdehyde + pyruvate = (2S,4S)-4-hydroxy-2,3,4,5-tetrahydrodipicolinate + H2O + H(+). The protein operates within amino-acid biosynthesis; L-lysine biosynthesis via DAP pathway; (S)-tetrahydrodipicolinate from L-aspartate: step 3/4. Functionally, catalyzes the condensation of (S)-aspartate-beta-semialdehyde [(S)-ASA] and pyruvate to 4-hydroxy-tetrahydrodipicolinate (HTPA). This is 4-hydroxy-tetrahydrodipicolinate synthase from Rhodopseudomonas palustris (strain BisA53).